Consider the following 268-residue polypeptide: Undecaprenyl-diphosphatase (268 aa).

7 helical membrane passes run 41–61 (LAYS…LIYF), 81–101 (WLTY…PLYM), 106–126 (YLLL…AVIF), 146–166 (MTLG…LPGI), 191–211 (FVLV…SEGG), 213–233 (VATP…LVTI), and 245–265 (VTLV…TRIL).

The protein belongs to the UppP family.

The protein resides in the cell membrane. The enzyme catalyses di-trans,octa-cis-undecaprenyl diphosphate + H2O = di-trans,octa-cis-undecaprenyl phosphate + phosphate + H(+). Catalyzes the dephosphorylation of undecaprenyl diphosphate (UPP). This is Undecaprenyl-diphosphatase from Pyrobaculum islandicum (strain DSM 4184 / JCM 9189 / GEO3).